The primary structure comprises 724 residues: Putative methyltransferase NSUN7 (724 aa).

C444 (nucleophile) is an active-site residue. Disordered regions lie at residues 542-574 (KTLKRDKKRKKSKALPSRAPHHGDPLRDHLAVD), 595-629 (ISTSTKMSAPAKTVSQAGTSSQVRKPSKPLSTPLV), and 698-724 (TSSTSRRKEKVKESTTSSHVRHPRPWL). Positions 543–554 (TLKRDKKRKKSK) are enriched in basic residues. The span at 562–572 (HHGDPLRDHLA) shows a compositional bias: basic and acidic residues. The segment covering 595 to 618 (ISTSTKMSAPAKTVSQAGTSSQVR) has biased composition (polar residues).

The protein belongs to the class I-like SAM-binding methyltransferase superfamily. RsmB/NOP family. In terms of tissue distribution, expressed in testis.

Its function is as follows. May have S-adenosyl-L-methionine-dependent methyl-transferase activity. The protein is Putative methyltransferase NSUN7 (Nsun7) of Mus musculus (Mouse).